We begin with the raw amino-acid sequence, 241 residues long: Glucosamine-6-phosphate deaminase (241 aa).

D67 serves as the catalytic Proton acceptor; for enolization step. N136 acts as the For ring-opening step in catalysis. H138 serves as the catalytic Proton acceptor; for ring-opening step. E143 (for ring-opening step) is an active-site residue.

Belongs to the glucosamine/galactosamine-6-phosphate isomerase family. NagB subfamily.

It carries out the reaction alpha-D-glucosamine 6-phosphate + H2O = beta-D-fructose 6-phosphate + NH4(+). Its pathway is amino-sugar metabolism; N-acetylneuraminate degradation; D-fructose 6-phosphate from N-acetylneuraminate: step 5/5. Catalyzes the reversible isomerization-deamination of glucosamine 6-phosphate (GlcN6P) to form fructose 6-phosphate (Fru6P) and ammonium ion. The sequence is that of Glucosamine-6-phosphate deaminase from Clostridium tetani (strain Massachusetts / E88).